Consider the following 340-residue polypeptide: 4-hydroxy-2-oxovalerate aldolase (340 aa).

Residues 8–260 (VILHDMSLRD…HHGVNLYDIM (253 aa)) form the Pyruvate carboxyltransferase domain. 16–17 (RD) serves as a coordination point for substrate. Residue aspartate 17 coordinates Mn(2+). Histidine 20 serves as the catalytic Proton acceptor. Residues serine 170 and histidine 199 each contribute to the substrate site. Residues histidine 199 and histidine 201 each contribute to the Mn(2+) site. Residue tyrosine 290 participates in substrate binding.

Belongs to the 4-hydroxy-2-oxovalerate aldolase family.

It carries out the reaction (S)-4-hydroxy-2-oxopentanoate = acetaldehyde + pyruvate. The protein is 4-hydroxy-2-oxovalerate aldolase of Shewanella halifaxensis (strain HAW-EB4).